Reading from the N-terminus, the 110-residue chain is Large ribosomal subunit protein P2B (110 aa).

A Phosphoserine modification is found at Ser-29. Lys-49 is covalently cross-linked (Glycyl lysine isopeptide (Lys-Gly) (interchain with G-Cter in ubiquitin)). Positions 66–110 (VPTGGASSAAAGAAGAAAGGDAAEEEKEEEAKEESDDDMGFGLFD) are disordered. The segment covering 69–86 (GGASSAAAGAAGAAAGGD) has biased composition (low complexity). The segment covering 87 to 104 (AAEEEKEEEAKEESDDDM) has biased composition (acidic residues). Ser-100 carries the post-translational modification Phosphoserine.

This sequence belongs to the eukaryotic ribosomal protein P1/P2 family. Component of the large ribosomal subunit (LSU). Mature yeast ribosomes consist of a small (40S) and a large (60S) subunit. The 40S small subunit contains 1 molecule of ribosomal RNA (18S rRNA) and 33 different proteins (encoded by 57 genes). The large 60S subunit contains 3 rRNA molecules (25S, 5.8S and 5S rRNA) and 46 different proteins (encoded by 81 genes). The 5 acidic ribosomal P-proteins form the stalk structure of the 60S subunit. They are organized as a pentameric complex in which uL10/P0 interacts with 2 heterodimers, P1A-P2B and P1B-P2A. In terms of processing, the N-terminus is not modified.

It is found in the cytoplasm. Its function is as follows. Component of the ribosome, a large ribonucleoprotein complex responsible for the synthesis of proteins in the cell. The small ribosomal subunit (SSU) binds messenger RNAs (mRNAs) and translates the encoded message by selecting cognate aminoacyl-transfer RNA (tRNA) molecules. The large subunit (LSU) contains the ribosomal catalytic site termed the peptidyl transferase center (PTC), which catalyzes the formation of peptide bonds, thereby polymerizing the amino acids delivered by tRNAs into a polypeptide chain. The nascent polypeptides leave the ribosome through a tunnel in the LSU and interact with protein factors that function in enzymatic processing, targeting, and the membrane insertion of nascent chains at the exit of the ribosomal tunnel. This chain is Large ribosomal subunit protein P2B, found in Saccharomyces cerevisiae (strain ATCC 204508 / S288c) (Baker's yeast).